The sequence spans 315 residues: Olfactory receptor 4A5 (315 aa).

At 1 to 23 (MRQNNNITEFVLLGFSQDPGVQK) the chain is on the extracellular side. Asn-6 carries an N-linked (GlcNAc...) asparagine glycan. Residues 24-47 (ALFVMFLLTYLVTVVGNLLIVVDI) traverse the membrane as a helical segment. Residues 48–55 (IASPSLGS) lie on the Cytoplasmic side of the membrane. Residues 56–77 (PMYFFLACLSFIDAAYSTTISP) traverse the membrane as a helical segment. Residues 78–98 (KLIVGLFCDKKTISFQGCMGQ) lie on the Extracellular side of the membrane. A disulfide bridge links Cys-95 with Cys-186. A helical membrane pass occupies residues 99–118 (LFIDHFFGGAEVFLLVVMAC). Residues 119–137 (DRYVAICKPLHYLTIMNRQ) are Cytoplasmic-facing. A helical transmembrane segment spans residues 138 to 156 (VCFLLLVVAMIGGFVHSAF). Residues 157–192 (QIVVYSLPFCGPNVIVHFSCDMHPLLELACTDTYFI) are Extracellular-facing. A helical membrane pass occupies residues 193 to 216 (GLTVVVNSGAICMVIFNLLLISYG). Residues 217 to 232 (VILSSLKTYSQEKRGK) lie on the Cytoplasmic side of the membrane. The helical transmembrane segment at 233–255 (ALSTCSSGSTVVVLFFVPCIFIY) threads the bilayer. The Extracellular portion of the chain corresponds to 256–266 (VRPVSNFPTDK). A helical membrane pass occupies residues 267–286 (FMTVFYTIITHMLSPLIYTL). The Cytoplasmic portion of the chain corresponds to 287–315 (RNSEMRNAIEKLLGKKLTIFIIGGVSVLM).

Belongs to the G-protein coupled receptor 1 family.

The protein localises to the cell membrane. Functionally, odorant receptor. This is Olfactory receptor 4A5 (OR4A5) from Homo sapiens (Human).